Consider the following 525-residue polypeptide: Glutamate--cysteine ligase (525 aa).

This sequence belongs to the glutamate--cysteine ligase type 1 family. Type 1 subfamily.

It catalyses the reaction L-cysteine + L-glutamate + ATP = gamma-L-glutamyl-L-cysteine + ADP + phosphate + H(+). The protein operates within sulfur metabolism; glutathione biosynthesis; glutathione from L-cysteine and L-glutamate: step 1/2. The polypeptide is Glutamate--cysteine ligase (Alcanivorax borkumensis (strain ATCC 700651 / DSM 11573 / NCIMB 13689 / SK2)).